The following is a 206-amino-acid chain: Large ribosomal subunit protein mL62 (206 aa).

The transit peptide at Met-1 to Ala-29 directs the protein to the mitochondrion. At Gln-90 the chain carries N5-methylglutamine.

Belongs to the prokaryotic/mitochondrial release factor family. Mitochondrion-specific ribosomal protein mL62 subfamily. Component of the mitochondrial ribosome large subunit (39S) which comprises a 16S rRNA and about 50 distinct proteins. Methylation of glutamine in the GGQ triplet by HEMK1.

It is found in the mitochondrion. It carries out the reaction an N-acyl-L-alpha-aminoacyl-tRNA + H2O = an N-acyl-L-amino acid + a tRNA + H(+). In terms of biological role, essential peptidyl-tRNA hydrolase component of the mitochondrial large ribosomal subunit. Acts as a codon-independent translation release factor that has lost all stop codon specificity and directs the termination of translation in mitochondrion, possibly in case of abortive elongation. May be involved in the hydrolysis of peptidyl-tRNAs that have been prematurely terminated and thus in the recycling of stalled mitochondrial ribosomes. The chain is Large ribosomal subunit protein mL62 from Bos taurus (Bovine).